A 3625-amino-acid chain; its full sequence is Cubilin (3625 aa).

Residues Met1–Ala20 form the signal peptide. The propeptide at Glu21 to Arg36 is removed in mature form. Residues Pro43 to Gly50 are interaction with AMN. Asn106 is a glycosylation site (N-linked (GlcNAc...) asparagine). The EGF-like 1 domain maps to Asp133 to Ser169. Disulfide bonds link Cys137-Cys148, Cys142-Cys157, Cys159-Cys168, Cys175-Cys191, Cys185-Cys200, and Cys202-Cys211. The 42-residue stretch at Asp171–Ala212 folds into the EGF-like 2; calcium-binding domain. N-linked (GlcNAc...) asparagine glycosylation is present at Asn257. The EGF-like 3; calcium-binding domain occupies Asp264–Glu305. 20 disulfide bridges follow: Cys268–Cys281, Cys275–Cys290, Cys293–Cys304, Cys310–Cys325, Cys317–Cys334, Cys337–Cys348, Cys354–Cys367, Cys361–Cys377, Cys379–Cys393, Cys400–Cys410, Cys405–Cys419, Cys421–Cys430, Cys437–Cys448, Cys442–Cys457, Cys459–Cys468, Cys475–Cys501, Cys528–Cys550, Cys591–Cys617, Cys644–Cys666, and Cys709–Cys734. The region spanning Asp306–Thr349 is the EGF-like 4; calcium-binding domain. 2 EGF-like domains span residues Leu350–Val394 and Leu396–Thr431. The N-linked (GlcNAc...) asparagine glycan is linked to Asn429. An EGF-like 7; calcium-binding domain is found at Asn433 to His469. CUB domains lie at Cys475 to Arg587, Cys591 to Thr703, Cys709 to Ala816, Cys817 to Glu928, Cys932 to Thr1042, Ser1045 to Ser1163, Cys1167 to Thr1279, Cys1280 to His1391, Cys1393 to Val1508, Cys1512 to Ala1621, Cys1622 to Ser1736, Cys1740 to Ile1852, Gly1854 to Met1965, Cys1980 to Ser2093, Cys2094 to Lys2215, Cys2219 to Ala2336, Cys2338 to Ser2450, Cys2454 to Ser2567, Cys2572 to Thr2689, Cys2691 to Glu2803, Cys2807 to Arg2921, Cys2922 to Thr3037, Cys3039 to Thr3152, Cys3159 to Leu3276, Cys3280 to Cys3397, Cys3397 to Ser3509, and Cys3513 to Ser3625. N-linked (GlcNAc...) asparagine glycosylation is found at Asn712 and Asn749. Residues Cys761 and Cys779 are joined by a disulfide bond. Asn781 carries an N-linked (GlcNAc...) asparagine glycan. The cysteines at positions 817 and 842 are disulfide-linked. N-linked (GlcNAc...) asparagine glycosylation is present at Asn857. Cystine bridges form between Cys869–Cys891 and Cys932–Cys958. The N-linked (GlcNAc...) asparagine glycan is linked to Asn957. Glu980 contributes to the Ca(2+) binding site. An N-linked (GlcNAc...) asparagine glycan is attached at Asn984. A disulfide bond links Cys985 and Cys1005. Asp988, Asp1027, Asp1029, and Leu1030 together coordinate Ca(2+). N-linked (GlcNAc...) asparagine glycosylation occurs at Asn1048. Residues Glu1097, Asp1107, and Asp1148 each coordinate Ca(2+). Cysteines 1104 and 1126 form a disulfide. The cysteines at positions 1167 and 1193 are disulfide-linked. Asn1170 is a glycosylation site (N-linked (GlcNAc...) asparagine). Glu1215 is a binding site for Ca(2+). Asn1219 carries an N-linked (GlcNAc...) asparagine glycan. Cysteines 1220 and 1242 form a disulfide. Asp1223, Asp1264, Gly1266, and Gln1267 together coordinate Ca(2+). Residues Cys1280 and Cys1308 are joined by a disulfide bond. Asn1287, Asn1309, and Asn1321 each carry an N-linked (GlcNAc...) asparagine glycan. Residue Glu1330 participates in Ca(2+) binding. Residue Asn1334 is glycosylated (N-linked (GlcNAc...) asparagine). The cysteines at positions 1335 and 1353 are disulfide-linked. Residues Asp1338, Asp1375, and Val1377 each contribute to the Ca(2+) site. Intrachain disulfides connect Cys1393–Cys1419 and Cys1446–Cys1468. N-linked (GlcNAc...) asparagine glycosylation occurs at Asn1502. A disulfide bond links Cys1512 and Cys1538. An N-linked (GlcNAc...) asparagine glycan is attached at Asn1553. Intrachain disulfides connect Cys1565–Cys1583, Cys1622–Cys1649, Cys1677–Cys1699, Cys1740–Cys1766, and Cys1793–Cys1814. A glycan (N-linked (GlcNAc...) asparagine) is linked at Asn1648. Asn1804, Asn1821, and Asn1887 each carry an N-linked (GlcNAc...) asparagine glycan. Intrachain disulfides connect Cys1907–Cys1929, Cys1980–Cys2008, and Cys2034–Cys2056. Asn2087 and Asn2119 each carry an N-linked (GlcNAc...) asparagine glycan. Disulfide bonds link Cys2094/Cys2120 and Cys2219/Cys2249. N-linked (GlcNAc...) asparagine glycosylation is present at Asn2276. Disulfide bonds link Cys2277-Cys2299 and Cys2338-Cys2365. N-linked (GlcNAc...) asparagine glycans are attached at residues Asn2388 and Asn2402. Intrachain disulfides connect Cys2392/Cys2413, Cys2454/Cys2480, and Cys2507/Cys2529. Residues Asn2533, Asn2583, Asn2594, and Asn2612 are each glycosylated (N-linked (GlcNAc...) asparagine). Cys2572 and Cys2601 form a disulfide bridge. Cystine bridges form between Cys2630–Cys2651, Cys2691–Cys2717, Cys2744–Cys2766, Cys2807–Cys2833, and Cys2862–Cys2885. N-linked (GlcNAc...) asparagine glycans are attached at residues Asn2887, Asn2925, Asn2928, and Asn2947. 2 disulfide bridges follow: Cys2922–Cys2948 and Cys2979–Cys3001. At Thr3010 the chain carries Phosphothreonine. 2 cysteine pairs are disulfide-bonded: Cys3039/Cys3066 and Cys3093/Cys3115. 3 N-linked (GlcNAc...) asparagine glycosylation sites follow: Asn3044, Asn3105, and Asn3127. Disulfide bonds link Cys3159–Cys3187 and Cys3217–Cys3239. N-linked (GlcNAc...) asparagine glycans are attached at residues Asn3270 and Asn3285. 2 disulfide bridges follow: Cys3280–Cys3308 and Cys3334–Cys3356. The N-linked (GlcNAc...) asparagine glycan is linked to Asn3359. Cys3397 and Cys3423 are joined by a disulfide. 3 N-linked (GlcNAc...) asparagine glycosylation sites follow: Asn3432, Asn3459, and Asn3535. 3 disulfide bridges follow: Cys3450-Cys3472, Cys3513-Cys3539, and Cys3566-Cys3588.

As to quaternary structure, interacts with AMN. Component of the cubam complex composed of one CUBN trimer and one AMN chain. The cubam complex can dimerize. Interacts with LRP2 in a dual-receptor complex in a calcium-dependent manner. Found in a complex with PID1/PCLI1, LRP1 and CUBNI. Interacts with LRP1 and PID1/PCLI1. The precursor is cleaved by a trans-Golgi proteinase furin, removing a propeptide. Post-translationally, N-glycosylated. As to expression, detected in kidney cortex (at protein level).

Its subcellular location is the apical cell membrane. The protein localises to the cell membrane. It localises to the membrane. It is found in the coated pit. The protein resides in the endosome. Its subcellular location is the lysosome membrane. Endocytic receptor which plays a role in lipoprotein, vitamin and iron metabolism by facilitating their uptake. Acts together with LRP2 to mediate endocytosis of high-density lipoproteins, GC, hemoglobin, ALB, TF and SCGB1A1. Acts together with AMN to mediate endocytosis of the CBLIF-cobalamin complex. Binds to ALB, MB, Kappa and lambda-light chains, TF, hemoglobin, GC, SCGB1A1, APOA1, high density lipoprotein, and the CBLIF-cobalamin complex. Ligand binding requires calcium. Serves as important transporter in several absorptive epithelia, including intestine, renal proximal tubules and embryonic yolk sac. May play an important role in the development of the peri-implantation embryo through internalization of APOA1 and cholesterol. Binds to LGALS3 at the maternal-fetal interface. The chain is Cubilin (CUBN) from Sus scrofa (Pig).